The sequence spans 382 residues: G2/mitotic-specific cyclin-B2 (382 aa).

A compositionally biased stretch (polar residues) spans 1–12; that stretch reads MSSVEAVTQQQL. The disordered stretch occupies residues 1–78; that stretch reads MSSVEAVTQQ…HTSAGDPAPI (78 aa). The span at 38-47 shows a compositional bias: low complexity; it reads NRNAAAAANR.

Belongs to the cyclin family. Cyclin AB subfamily. Interacts with the CDK1 protein kinase to form a serine/threonine kinase holoenzyme complex also known as maturation promoting factor (MPF). The cyclin subunit imparts substrate specificity to the complex.

Functionally, essential for the control of the cell cycle at the G2/M (mitosis) transition. In Oryzias javanicus (Javanese ricefish), this protein is G2/mitotic-specific cyclin-B2 (ccnb2).